Here is a 316-residue protein sequence, read N- to C-terminus: Pantothenate kinase (316 aa).

Residue 95-102 participates in ATP binding; sequence GSVAVGKS.

It belongs to the prokaryotic pantothenate kinase family.

The protein resides in the cytoplasm. It catalyses the reaction (R)-pantothenate + ATP = (R)-4'-phosphopantothenate + ADP + H(+). It functions in the pathway cofactor biosynthesis; coenzyme A biosynthesis; CoA from (R)-pantothenate: step 1/5. The polypeptide is Pantothenate kinase (Shewanella oneidensis (strain ATCC 700550 / JCM 31522 / CIP 106686 / LMG 19005 / NCIMB 14063 / MR-1)).